The sequence spans 338 residues: Secretion system apparatus protein SsaL (338 aa).

The protein is Secretion system apparatus protein SsaL (ssaL) of Salmonella typhimurium (strain LT2 / SGSC1412 / ATCC 700720).